Consider the following 228-residue polypeptide: Urease accessory protein UreF (228 aa).

It belongs to the UreF family. As to quaternary structure, ureD, UreF and UreG form a complex that acts as a GTP-hydrolysis-dependent molecular chaperone, activating the urease apoprotein by helping to assemble the nickel containing metallocenter of UreC. The UreE protein probably delivers the nickel.

It is found in the cytoplasm. In terms of biological role, required for maturation of urease via the functional incorporation of the urease nickel metallocenter. The protein is Urease accessory protein UreF of Alkalilimnicola ehrlichii (strain ATCC BAA-1101 / DSM 17681 / MLHE-1).